We begin with the raw amino-acid sequence, 232 residues long: Peptidyl-prolyl cis-trans isomerase FKBP18, chloroplastic (232 aa).

The PPIase FKBP-type domain maps to 108 to 226 (GSTAQVHFDC…ELNIELLRVT (119 aa)).

The protein belongs to the FKBP-type PPIase family.

The protein localises to the plastid. The protein resides in the chloroplast thylakoid lumen. The enzyme catalyses [protein]-peptidylproline (omega=180) = [protein]-peptidylproline (omega=0). Functionally, PPIases accelerate the folding of proteins. It catalyzes the cis-trans isomerization of proline imidic peptide bonds in oligopeptides. The sequence is that of Peptidyl-prolyl cis-trans isomerase FKBP18, chloroplastic (FKBP18) from Arabidopsis thaliana (Mouse-ear cress).